The chain runs to 342 residues: Terpene cyclase resF (342 aa).

A run of 5 helical transmembrane segments spans residues 5 to 25 (VSVV…GVFA), 81 to 101 (FMAQ…TEDF), 115 to 135 (WGVF…GVCF), 151 to 171 (STWI…MLIF), and 182 to 202 (IWGV…ASLL). An N-linked (GlcNAc...) asparagine glycan is attached at Asn-224. Helical transmembrane passes span 229–249 (YVVA…FHLG), 269–289 (FLQI…WHEL), and 305–325 (YLLL…AWAL).

It belongs to the membrane-bound ascI terpene cyclase family.

The protein resides in the membrane. It participates in antifungal biosynthesis. In terms of biological role, cyclase; part of the gene cluster that mediates the biosynthesis of the tetrahydropyranyl antifungal agent restricticin that acts as an inhibitor of CYP51 and blocks the ergosterol biosynthesis. The highly reducing polyketide synthase resH, the short chain dehydrogenase resG, the cyclase resF, the FAD-dependent monooxygenase resA and the enoylreductase resD are required to generate the first stable intermediate desmethylrestrictinol. ResH with resD biosynthesize the first polyketide chain intermediate that is reduced by resG, followed by epoxidation by resA before 6-endo cyclization via epoxide opening by resF leads to desmethylrestrictinol. The methyltransferase resE then catalyzes the C4 O-methylation of desmethylrestrictinol to produce restrictinol, and the nonribosomal peptide synthetase resC catalyzes the C3 esterification of restrictinol with glycine that leads to restricticin. The polypeptide is Terpene cyclase resF (Aspergillus sclerotiorum).